A 308-amino-acid polypeptide reads, in one-letter code: 1D-myo-inositol 2-acetamido-2-deoxy-alpha-D-glucopyranoside deacetylase (308 aa).

Residues H37, D40, and H171 each contribute to the Zn(2+) site.

It belongs to the MshB deacetylase family. Requires Zn(2+) as cofactor.

It catalyses the reaction 1D-myo-inositol 2-acetamido-2-deoxy-alpha-D-glucopyranoside + H2O = 1D-myo-inositol 2-amino-2-deoxy-alpha-D-glucopyranoside + acetate. Its function is as follows. Catalyzes the deacetylation of 1D-myo-inositol 2-acetamido-2-deoxy-alpha-D-glucopyranoside (GlcNAc-Ins) in the mycothiol biosynthesis pathway. In Mycobacterium sp. (strain JLS), this protein is 1D-myo-inositol 2-acetamido-2-deoxy-alpha-D-glucopyranoside deacetylase.